A 317-amino-acid chain; its full sequence is 4-hydroxy-3-methylbut-2-enyl diphosphate reductase (317 aa).

Position 12 (Cys12) interacts with [4Fe-4S] cluster. 2 residues coordinate (2E)-4-hydroxy-3-methylbut-2-enyl diphosphate: His41 and His74. 2 residues coordinate dimethylallyl diphosphate: His41 and His74. Residues His41 and His74 each contribute to the isopentenyl diphosphate site. A [4Fe-4S] cluster-binding site is contributed by Cys97. His125 contacts (2E)-4-hydroxy-3-methylbut-2-enyl diphosphate. His125 serves as a coordination point for dimethylallyl diphosphate. His125 contacts isopentenyl diphosphate. The active-site Proton donor is the Glu127. Thr168 provides a ligand contact to (2E)-4-hydroxy-3-methylbut-2-enyl diphosphate. A [4Fe-4S] cluster-binding site is contributed by Cys198. (2E)-4-hydroxy-3-methylbut-2-enyl diphosphate contacts are provided by Ser226, Ser227, Asn228, and Ser270. Residues Ser226, Ser227, Asn228, and Ser270 each coordinate dimethylallyl diphosphate. Isopentenyl diphosphate-binding residues include Ser226, Ser227, Asn228, and Ser270.

This sequence belongs to the IspH family. In terms of assembly, homodimer. [4Fe-4S] cluster serves as cofactor.

The enzyme catalyses isopentenyl diphosphate + 2 oxidized [2Fe-2S]-[ferredoxin] + H2O = (2E)-4-hydroxy-3-methylbut-2-enyl diphosphate + 2 reduced [2Fe-2S]-[ferredoxin] + 2 H(+). The catalysed reaction is dimethylallyl diphosphate + 2 oxidized [2Fe-2S]-[ferredoxin] + H2O = (2E)-4-hydroxy-3-methylbut-2-enyl diphosphate + 2 reduced [2Fe-2S]-[ferredoxin] + 2 H(+). It participates in isoprenoid biosynthesis; dimethylallyl diphosphate biosynthesis; dimethylallyl diphosphate from (2E)-4-hydroxy-3-methylbutenyl diphosphate: step 1/1. It functions in the pathway isoprenoid biosynthesis; isopentenyl diphosphate biosynthesis via DXP pathway; isopentenyl diphosphate from 1-deoxy-D-xylulose 5-phosphate: step 6/6. Its function is as follows. Catalyzes the conversion of 1-hydroxy-2-methyl-2-(E)-butenyl 4-diphosphate (HMBPP) into a mixture of isopentenyl diphosphate (IPP) and dimethylallyl diphosphate (DMAPP). Acts in the terminal step of the DOXP/MEP pathway for isoprenoid precursor biosynthesis. This Proteus mirabilis (strain HI4320) protein is 4-hydroxy-3-methylbut-2-enyl diphosphate reductase.